The primary structure comprises 403 residues: uncharacterized protein (403 aa).

One can recognise a Bro-N domain in the interval 3–126; sequence QVKIGQFKFG…EVIPQVLCTG (124 aa).

This is an uncharacterized protein from Lepidoptera (butterflies and moths).